Consider the following 389-residue polypeptide: MSHRKYEAPRHGSLGFLPRKRAAKQRGRVKSFPKDVKSKPVALTAFLGYKAGMTTIVRDLDRPGSKMHKREVVEAATVVDTPPMVVVGVVGYVETPRGLRSLTTVWAEHLSEEVRRRFYKNWYKSKKKAFTKYSGKYATDAKQVETELARIKKYASVVRVLAHTQIKKTPLSQKKAHLAEIQINGGSVSDKVDWAKEHFEKEVSVDSVFEQDEMIDVIAVTKGHGFEGVTHRWGTKKLPRKTHRGLRKVACIGAWHPANVNWTVARAGQNGYHHRTSINHKVYRVGKGTDEANGATEFDRTKKTINPMGGFVRYGNVNNDFVLLKGSIPGVKKRVVTLRKSLYVDTSRRAVEKVNLKWIDTASRFGKGRFQTPAEKHAFMGTLKKDLEN.

It belongs to the universal ribosomal protein uL3 family. Component of the large ribosomal subunit. Mature ribosomes consist of a small (40S) and a large (60S) subunit. The 40S subunit contains about 32 different proteins and 1 molecule of RNA (18S). The 60S subunit contains 45 different proteins and 3 molecules of RNA (25S, 5.8S and 5S).

It localises to the cytoplasm. Functionally, component of the ribosome, a large ribonucleoprotein complex responsible for the synthesis of proteins in the cell. The small ribosomal subunit (SSU) binds messenger RNAs (mRNAs) and translates the encoded message by selecting cognate aminoacyl-transfer RNA (tRNA) molecules. The large subunit (LSU) contains the ribosomal catalytic site termed the peptidyl transferase center (PTC), which catalyzes the formation of peptide bonds, thereby polymerizing the amino acids delivered by tRNAs into a polypeptide chain. The nascent polypeptides leave the ribosome through a tunnel in the LSU and interact with protein factors that function in enzymatic processing, targeting, and the membrane insertion of nascent chains at the exit of the ribosomal tunnel. RPL3 plays a role in coordinating processes of accommodating the aminoacyl-tRNA in the PTC. In Candida albicans (strain SC5314 / ATCC MYA-2876) (Yeast), this protein is Large ribosomal subunit protein uL3.